We begin with the raw amino-acid sequence, 429 residues long: MLNLAQLQSQTRELLAALKQLTEHCPSAVDGTTEGMIPGLSPWSTTGESGEATRARETVLKCLAKLQVSLAGPIDVLQHMASQTQLLACLQWLGEFQVPACIPLDGSASIKDVAELIGVPENHICRIVRMAITAGFLQEPELGHVAHSPLSAAFVTNPSYLDAAMFLARITTPAALNMPSITRQRTAGMCERVNQVEQNNNIINMVTSSTLDETALPRLERQWYAYLRFGTGNLCDTATDIISCLNSFQGTSATVVEVGARSLDRAMTLANRYPTLRFIIQIHLPSSASGSGKDEAKYDRTRAIRSHSQITVQYRTPGTPQQIQDAAVYIINFPLPFPGVSSCSISAQLETELRAHLQALRLSPAATLVLTAPALPERGARGTEVAVLTRIRDLSFLQLANDREPEISELINLLNGVGDSEGRFVVVKK.

One can recognise an HTH iclR-type domain in the interval 80–144; that stretch reads MASQTQLLAC…GFLQEPELGH (65 aa). Positions 110–129 form a DNA-binding region, H-T-H motif; the sequence is IKDVAELIGVPENHICRIVR.

Its subcellular location is the nucleus. Its function is as follows. Transcriptional coactivator; part of the gene cluster that mediates the biosynthesis of the tetrahydroxanthone dimer secalonic acid D. This Aspergillus aculeatus (strain ATCC 16872 / CBS 172.66 / WB 5094) protein is Transcriptional coactivator AacuS.